We begin with the raw amino-acid sequence, 116 residues long: Protein aq_1857 (116 aa).

This sequence belongs to the HesB/IscA family.

The chain is Protein aq_1857 from Aquifex aeolicus (strain VF5).